A 281-amino-acid chain; its full sequence is Large ribosomal subunit protein uL2 (281 aa).

The tract at residues 222-281 (TVRGSAMNPNDHPHGGGEGRQPIGRKSPMTPWGKRALGVKTRATKKASNQFIIRRRKETK) is disordered.

This sequence belongs to the universal ribosomal protein uL2 family. In terms of assembly, part of the 50S ribosomal subunit. Forms a bridge to the 30S subunit in the 70S ribosome.

Its function is as follows. One of the primary rRNA binding proteins. Required for association of the 30S and 50S subunits to form the 70S ribosome, for tRNA binding and peptide bond formation. It has been suggested to have peptidyltransferase activity; this is somewhat controversial. Makes several contacts with the 16S rRNA in the 70S ribosome. The protein is Large ribosomal subunit protein uL2 of Metamycoplasma hominis (strain ATCC 23114 / DSM 25592 / NBRC 14850 / NCTC 10111 / PG21) (Mycoplasma hominis).